The primary structure comprises 150 residues: Large ribosomal subunit protein uL13 (150 aa).

The disordered stretch occupies residues 129-150; it reads TEHPHAAQKPQPLQLNPSASAQ. Polar residues predominate over residues 139–150; that stretch reads QPLQLNPSASAQ.

This sequence belongs to the universal ribosomal protein uL13 family. As to quaternary structure, part of the 50S ribosomal subunit.

Its function is as follows. This protein is one of the early assembly proteins of the 50S ribosomal subunit, although it is not seen to bind rRNA by itself. It is important during the early stages of 50S assembly. The chain is Large ribosomal subunit protein uL13 from Synechococcus sp. (strain CC9605).